Consider the following 276-residue polypeptide: NH(3)-dependent NAD(+) synthetase (276 aa).

ATP is bound at residue 43-50; sequence GISGGVDS. Asp49 is a Mg(2+) binding site. Arg146 contributes to the deamido-NAD(+) binding site. Residue Thr166 coordinates ATP. Mg(2+) is bound at residue Glu171. Deamido-NAD(+) contacts are provided by Lys179 and Asp186. Residues Lys195 and Thr217 each contribute to the ATP site. A deamido-NAD(+)-binding site is contributed by 266–267; that stretch reads HK.

The protein belongs to the NAD synthetase family. Homodimer.

It carries out the reaction deamido-NAD(+) + NH4(+) + ATP = AMP + diphosphate + NAD(+) + H(+). Its pathway is cofactor biosynthesis; NAD(+) biosynthesis; NAD(+) from deamido-NAD(+) (ammonia route): step 1/1. Its function is as follows. Catalyzes the ATP-dependent amidation of deamido-NAD to form NAD. Uses ammonia as a nitrogen source. The sequence is that of NH(3)-dependent NAD(+) synthetase from Vibrio vulnificus (strain YJ016).